Consider the following 432-residue polypeptide: Calcium uptake protein 2, mitochondrial (432 aa).

The transit peptide at methionine 1 to leucine 22 directs the protein to the mitochondrion. Residues lysine 169–glutamine 204 form the EF-hand 1 domain. Ca(2+)-binding residues include aspartate 182, aspartate 184, asparagine 186, methionine 188, glutamate 190, and glutamate 193. A Phosphoserine modification is found at serine 202. The region spanning glutamate 224 to glutamate 259 is the EF-hand 2; degenerate domain. An EF-hand 3; degenerate domain is found at threonine 290–leucine 325. The region spanning leucine 359–arginine 394 is the EF-hand 4 domain. Ca(2+) contacts are provided by aspartate 372, aspartate 374, aspartate 376, cysteine 378, and glutamate 383.

It belongs to the MICU1 family. MICU2 subfamily. Heterodimer; disulfide-linked; heterodimerizes with MICU1. Component of the uniplex complex, composed of MCU, EMRE/SMDT1, MICU1 and MICU2 in a 4:4:1:1 stoichiometry. In terms of tissue distribution, predominantly expressed in stomach, intestine, skeletal muscle, kidney, heart, testis, prostate and uterus.

Its subcellular location is the mitochondrion intermembrane space. It localises to the mitochondrion inner membrane. Calcium sensor of the mitochondrial calcium uniporter (MCU) channel, which senses calcium level via its EF-hand domains. MICU1 and MICU2 form a disulfide-linked heterodimer that stimulates and inhibits MCU activity, depending on the concentration of calcium. At low calcium levels, MICU1 occludes the pore of the MCU channel, preventing mitochondrial calcium uptake. At higher calcium levels, calcium-binding to MICU1 and MICU2 induces a conformational change that weakens MCU-MICU1 interactions and moves the MICU1-MICU2 heterodimer away from the pore, allowing calcium permeation through the MCU channel. The polypeptide is Calcium uptake protein 2, mitochondrial (Mus musculus (Mouse)).